We begin with the raw amino-acid sequence, 155 residues long: Endoribonuclease YbeY (155 aa).

The Zn(2+) site is built by histidine 114, histidine 118, and histidine 124.

The protein belongs to the endoribonuclease YbeY family. It depends on Zn(2+) as a cofactor.

The protein localises to the cytoplasm. Functionally, single strand-specific metallo-endoribonuclease involved in late-stage 70S ribosome quality control and in maturation of the 3' terminus of the 16S rRNA. The chain is Endoribonuclease YbeY from Escherichia coli O1:K1 / APEC.